A 255-amino-acid chain; its full sequence is Type III pantothenate kinase (255 aa).

An ATP-binding site is contributed by 6-13; sequence DIGNTNIK. 107–110 provides a ligand contact to substrate; that stretch reads GADR. The active-site Proton acceptor is the D109. T132 is a binding site for ATP. A substrate-binding site is contributed by T184.

The protein belongs to the type III pantothenate kinase family. In terms of assembly, homodimer. It depends on NH4(+) as a cofactor. The cofactor is K(+).

It is found in the cytoplasm. It carries out the reaction (R)-pantothenate + ATP = (R)-4'-phosphopantothenate + ADP + H(+). It functions in the pathway cofactor biosynthesis; coenzyme A biosynthesis; CoA from (R)-pantothenate: step 1/5. In terms of biological role, catalyzes the phosphorylation of pantothenate (Pan), the first step in CoA biosynthesis. In Roseiflexus castenholzii (strain DSM 13941 / HLO8), this protein is Type III pantothenate kinase.